The primary structure comprises 370 residues: Phosphate acyltransferase (370 aa).

The tract at residues 349 to 370 (SAGRAGQDAPDEMAAPGRSEKR) is disordered.

This sequence belongs to the PlsX family. Homodimer. Probably interacts with PlsY.

It is found in the cytoplasm. The catalysed reaction is a fatty acyl-[ACP] + phosphate = an acyl phosphate + holo-[ACP]. It participates in lipid metabolism; phospholipid metabolism. Functionally, catalyzes the reversible formation of acyl-phosphate (acyl-PO(4)) from acyl-[acyl-carrier-protein] (acyl-ACP). This enzyme utilizes acyl-ACP as fatty acyl donor, but not acyl-CoA. The protein is Phosphate acyltransferase of Cereibacter sphaeroides (strain ATCC 17023 / DSM 158 / JCM 6121 / CCUG 31486 / LMG 2827 / NBRC 12203 / NCIMB 8253 / ATH 2.4.1.) (Rhodobacter sphaeroides).